A 187-amino-acid polypeptide reads, in one-letter code: Large ribosomal subunit protein bL12cx (187 aa).

Residues 1–54 (MASTTLSIATTIRSSSPLTSASTHHFLSKPTAIEFPFRLSSSSSHRAINLRPIS) constitute a chloroplast transit peptide.

The protein belongs to the bacterial ribosomal protein bL12 family.

It localises to the plastid. It is found in the chloroplast. In Arabidopsis thaliana (Mouse-ear cress), this protein is Large ribosomal subunit protein bL12cx (RPL12C).